The primary structure comprises 208 residues: Holliday junction resolvase RecU (208 aa).

The segment at 1–30 (MNYPNGKPFNRNKSQVGRTHKGQTSKIDYG) is disordered. Positions 87, 89, 102, and 121 each coordinate Mg(2+).

Belongs to the RecU family. Mg(2+) is required as a cofactor.

The protein resides in the cytoplasm. It carries out the reaction Endonucleolytic cleavage at a junction such as a reciprocal single-stranded crossover between two homologous DNA duplexes (Holliday junction).. In terms of biological role, endonuclease that resolves Holliday junction intermediates in genetic recombination. Cleaves mobile four-strand junctions by introducing symmetrical nicks in paired strands. Promotes annealing of linear ssDNA with homologous dsDNA. Required for DNA repair, homologous recombination and chromosome segregation. The protein is Holliday junction resolvase RecU of Staphylococcus saprophyticus subsp. saprophyticus (strain ATCC 15305 / DSM 20229 / NCIMB 8711 / NCTC 7292 / S-41).